A 289-amino-acid polypeptide reads, in one-letter code: Aquaporin-2 (289 aa).

Residues 1–36 (MSNESNDLEKNISHLDPTGVDNAYIPPEQPETKHSR) form a disordered region. At 1–47 (MSNESNDLEKNISHLDPTGVDNAYIPPEQPETKHSRFNIDRDTLRNH) the chain is on the cytoplasmic side. A helical membrane pass occupies residues 48–68 (FIAAVGEFCGTFMFLWCAYVI). The Extracellular portion of the chain corresponds to 69 to 90 (CNVANHDVALTTEPEGSHPGQL). A helical transmembrane segment spans residues 91-111 (IMIALGFGFSVMFSIWCFAGV). At 112–135 (SGGALNPAVSLSLCLARAISPARC) the chain is on the cytoplasmic side. Positions 117-119 (NPA) match the NPA 1 motif. A helical transmembrane segment spans residues 136–156 (VVMWFPQIIAGMAAGGAASAM). The Extracellular portion of the chain corresponds to 157 to 175 (TPGKVLFTNALGLGCSRSR). Residues 176–196 (GLFLEMFGTAVLCLTVLMTAV) form a helical membrane-spanning segment. Residues 197 to 202 (EKRETN) lie on the Cytoplasmic side of the membrane. A helical membrane pass occupies residues 203–223 (FMAALPIGISLFMAHMALTGY). The Extracellular portion of the chain corresponds to 224–247 (TGTGVNPARSLGAAVAARYFPHYH). Residues 229-231 (NPA) carry the NPA 2 motif. A helical membrane pass occupies residues 248-268 (WIYWIGPLLGAFLAWSVWQLL). The Cytoplasmic portion of the chain corresponds to 269-289 (QILDYTTYVNAEKAAGQKKED).

The protein belongs to the MIP/aquaporin (TC 1.A.8) family.

The protein resides in the endoplasmic reticulum membrane. Its subcellular location is the cell membrane. Its function is as follows. Water channel required to facilitate the transport of water across membranes. Involved in freeze tolerance, osmotolerance and cell flocculation in liquid cultures. Is non-functional in most laboratory strains. In Saccharomyces cerevisiae (Baker's yeast), this protein is Aquaporin-2 (AQY2).